The sequence spans 466 residues: UPF0652 protein C16A11.03c (466 aa).

The protein belongs to the UPF0652 family.

It is found in the cytoplasm. The protein resides in the nucleus. The chain is UPF0652 protein C16A11.03c from Schizosaccharomyces pombe (strain 972 / ATCC 24843) (Fission yeast).